The following is a 406-amino-acid chain: Phosphopentomutase (406 aa).

Residues D10, D305, H310, D346, H347, and H358 each contribute to the Mn(2+) site.

It belongs to the phosphopentomutase family. It depends on Mn(2+) as a cofactor.

The protein localises to the cytoplasm. It carries out the reaction 2-deoxy-alpha-D-ribose 1-phosphate = 2-deoxy-D-ribose 5-phosphate. It catalyses the reaction alpha-D-ribose 1-phosphate = D-ribose 5-phosphate. The protein operates within carbohydrate degradation; 2-deoxy-D-ribose 1-phosphate degradation; D-glyceraldehyde 3-phosphate and acetaldehyde from 2-deoxy-alpha-D-ribose 1-phosphate: step 1/2. Isomerase that catalyzes the conversion of deoxy-ribose 1-phosphate (dRib-1-P) and ribose 1-phosphate (Rib-1-P) to deoxy-ribose 5-phosphate (dRib-5-P) and ribose 5-phosphate (Rib-5-P), respectively. The polypeptide is Phosphopentomutase (Vibrio cholerae serotype O1 (strain ATCC 39541 / Classical Ogawa 395 / O395)).